The primary structure comprises 745 residues: uncharacterized protein (745 aa).

Residues N158 to D256 form the HTH araC/xylS-type domain. DNA-binding regions (H-T-H motif) lie at residues S175–L196 and I223–T246.

This is an uncharacterized protein from Staphylococcus aureus (strain MW2).